We begin with the raw amino-acid sequence, 322 residues long: Peptidase 1 (322 aa).

Positions 1-18 (MKFVLAIASLLVLSVVYA) are cleaved as a signal peptide. Residues 19 to 99 (YPSEIRTFEE…LKKEFDLDAG (81 aa)) constitute a propeptide that is removed on maturation. A disulfide bond links Cys-131 and Cys-171. Cys-134 is a catalytic residue. A glycan (N-linked (GlcNAc...) asparagine) is linked at Asn-152. Residues His-270 and Asn-290 contribute to the active site.

Belongs to the peptidase C1 family. As to expression, expressed in the gut.

It is found in the secreted. It catalyses the reaction Broad endopeptidase specificity.. Probable thiol protease. The sequence is that of Peptidase 1 from Psoroptes ovis (Sheep scab mite).